The chain runs to 226 residues: Deoxyribose-phosphate aldolase (226 aa).

D94 acts as the Proton donor/acceptor in catalysis. Residue K156 is the Schiff-base intermediate with acetaldehyde of the active site. K185 acts as the Proton donor/acceptor in catalysis.

It belongs to the DeoC/FbaB aldolase family. DeoC type 1 subfamily.

The protein resides in the cytoplasm. It carries out the reaction 2-deoxy-D-ribose 5-phosphate = D-glyceraldehyde 3-phosphate + acetaldehyde. It functions in the pathway carbohydrate degradation; 2-deoxy-D-ribose 1-phosphate degradation; D-glyceraldehyde 3-phosphate and acetaldehyde from 2-deoxy-alpha-D-ribose 1-phosphate: step 2/2. Functionally, catalyzes a reversible aldol reaction between acetaldehyde and D-glyceraldehyde 3-phosphate to generate 2-deoxy-D-ribose 5-phosphate. In Burkholderia orbicola (strain MC0-3), this protein is Deoxyribose-phosphate aldolase.